The following is a 496-amino-acid chain: Solute carrier family 2, facilitated glucose transporter member 3 (496 aa).

The Cytoplasmic segment spans residues 1–10 (MGTQKVTPAL). The helical transmembrane segment at 11–32 (IFAITVATIGSFQFGYNTGVIN) threads the bilayer. The Extracellular segment spans residues 33–64 (APEKIIKEFINKTLTDKGNAPPSEVLLTSLWS). Asn43 is a glycosylation site (N-linked (GlcNAc...) asparagine). The helical transmembrane segment at 65 to 85 (LSVAIFSVGGMIGSFSVGLFV) threads the bilayer. The Cytoplasmic segment spans residues 86–90 (NRFGR). Residues 91 to 111 (RNSMLIVNLLAVTGGCFMGLC) form a helical membrane-spanning segment. Residues 112-118 (KVAKSVE) lie on the Extracellular side of the membrane. Residues 119 to 142 (MLILGRLIIGLFCGLCTGFVPMYI) traverse the membrane as a helical segment. At 143–153 (GEISPTALRGA) the chain is on the cytoplasmic side. A helical membrane pass occupies residues 154–174 (FGTLNQLGIVVGILVAQIFGL). Gln159 contacts D-glucose. Over 175 to 183 (EFILGSEEL) the chain is Extracellular. The chain crosses the membrane as a helical span at residues 184-204 (WPLLLGFTILPTILQSAALPF). At 205 to 269 (CPESPRFLLI…LFRVSSYRQP (65 aa)) the chain is on the cytoplasmic side. The residue at position 232 (Thr232) is a Phosphothreonine. Residues 270–290 (IIISIVLQLSQQLSGINAVFY) form a helical membrane-spanning segment. The tract at residues 277-279 (QLS) is important for selectivity against fructose. Residues 280-281 (QQ) and Asn286 each bind D-glucose. Over 291-304 (YSTGIFKDAGVQEP) the chain is Extracellular. Residues 305–325 (IYATIGAGVVNTIFTVVSLFL) traverse the membrane as a helical segment. Asn315 is a D-glucose binding site. Topologically, residues 326 to 331 (VERAGR) are cytoplasmic. Residues 332–352 (RTLHMIGLGGMAFCSTLMTVS) traverse the membrane as a helical segment. Residues 353–363 (LLLKDNYNGMS) are Extracellular-facing. The chain crosses the membrane as a helical span at residues 364 to 389 (FVCIGAILVFVAFFEIGPGPIPWFIV). 2 residues coordinate D-glucose: Glu378 and Trp386. Residues 390–399 (AELFSQGPRP) lie on the Cytoplasmic side of the membrane. Residues 400-420 (AAMAVAGCSNWTSNFLVGLLF) traverse the membrane as a helical segment. At 421 to 429 (PSAAHYLGA) the chain is on the extracellular side. The helical transmembrane segment at 430-450 (YVFIIFTGFLITFLAFTFFKV) threads the bilayer. At 451 to 496 (PETRGRTFEDITRAFEGQAHGADRSGKDGVMEVNSIEPAKETTTNV) the chain is on the cytoplasmic side. Ser475 and Ser485 each carry phosphoserine. The residue at position 492 (Thr492) is a Phosphothreonine.

This sequence belongs to the major facilitator superfamily. Sugar transporter (TC 2.A.1.1) family. Glucose transporter subfamily. In terms of assembly, interacts with SMIM43; the interaction may promote SLC2A3-mediated glucose transport to meet the energy needs of mesendoderm differentiation.

Its subcellular location is the cell membrane. It localises to the perikaryon. The protein localises to the cell projection. It catalyses the reaction D-glucose(out) = D-glucose(in). It carries out the reaction D-galactose(in) = D-galactose(out). With respect to regulation, deoxyglucose transport is inhibited by D-glucose, D-galactose and maltose. Galactose transport is inhibited by D-glucose and maltose. Functionally, facilitative glucose transporter. Can also mediate the uptake of various other monosaccharides across the cell membrane. Mediates the uptake of glucose, 2-deoxyglucose, galactose, mannose, xylose and fucose, and probably also dehydroascorbate. Does not mediate fructose transport. Required for mesendoderm differentiation. This chain is Solute carrier family 2, facilitated glucose transporter member 3, found in Pongo abelii (Sumatran orangutan).